The chain runs to 193 residues: MTETLETPATKIVPRLKTKYAESIKATLQDEFKYENVNQVPRLVKVVVNMGVGDAAKDSKLIDGAVRDLTQITGQKPQVTKARKSIAQFKLREGMPIGAHATLRGDRMWEFVDRLVSLALPRIRDFRGLSGKQFDGNGNYTFGLTEQVMFHEIDQDKIDRVRGMDITVVTTAKTDDEGRALLKALGFPFKTEA.

Belongs to the universal ribosomal protein uL5 family. As to quaternary structure, part of the 50S ribosomal subunit; part of the 5S rRNA/L5/L18/L25 subcomplex. Contacts the 5S rRNA and the P site tRNA. Forms a bridge to the 30S subunit in the 70S ribosome.

In terms of biological role, this is one of the proteins that bind and probably mediate the attachment of the 5S RNA into the large ribosomal subunit, where it forms part of the central protuberance. In the 70S ribosome it contacts protein S13 of the 30S subunit (bridge B1b), connecting the 2 subunits; this bridge is implicated in subunit movement. Contacts the P site tRNA; the 5S rRNA and some of its associated proteins might help stabilize positioning of ribosome-bound tRNAs. The protein is Large ribosomal subunit protein uL5 of Pseudarthrobacter chlorophenolicus (strain ATCC 700700 / DSM 12829 / CIP 107037 / JCM 12360 / KCTC 9906 / NCIMB 13794 / A6) (Arthrobacter chlorophenolicus).